The primary structure comprises 315 residues: Oxalate oxidoreductase subunit delta (315 aa).

4Fe-4S ferredoxin-type domains are found at residues 252 to 280 (QRPI…TRTE) and 281 to 310 (EGPV…NVPE). [4Fe-4S] cluster is bound by residues C261, C264, C267, C271, C290, C293, C296, and C300.

In terms of assembly, dimer of heterotrimer of one alpha, one beta and one delta subunit. [4Fe-4S] cluster is required as a cofactor.

It catalyses the reaction oxidized 2[4Fe-4S]-[ferredoxin] + oxalate = reduced 2[4Fe-4S]-[ferredoxin] + 2 CO2. Functionally, catalyzes the anaerobic oxidation of oxalate using a broad range of electron acceptors, including ferredoxin and the nickel-dependent carbon monoxide dehydrogenase. Does not require coenzyme A as cosubstrate. Enables anaerobic growth on oxalate which is used as energy source by the bacteria. This is Oxalate oxidoreductase subunit delta from Moorella thermoacetica (strain ATCC 39073 / JCM 9320).